The chain runs to 364 residues: C3a anaphylatoxin chemotactic receptor (364 aa).

The Extracellular segment spans residues 1 to 50 (MGDNMDFSEHYGNFSENYVTESYGEFDLYYDPLNETSLSEQGHRSIWVLS). N-linked (GlcNAc...) asparagine glycans are attached at residues N13 and N34. A helical transmembrane segment spans residues 51-71 (IVLCSIACVLGITGNAFVIWI). Residues 72 to 82 (AGVKMKRTVNT) lie on the Cytoplasmic side of the membrane. The helical transmembrane segment at 83–103 (IWFVNLAAADLLCCVSIPFSI) threads the bilayer. The Extracellular portion of the chain corresponds to 104-120 (ADIILNSHWPYGEAMCK). C119 and C198 are disulfide-bonded. The chain crosses the membrane as a helical span at residues 121 to 141 (ILPSMVVLNMFASVFTLVLIS). At 142–159 (LDRFALVILPVWAQNHRS) the chain is on the cytoplasmic side. Residues 160–180 (ITLAWLLCGLVWVLGLLLSLP) traverse the membrane as a helical segment. The Extracellular portion of the chain corresponds to 181–220 (SMIYREIVVHDDMNITLCIYNHLQDKTEGNQSAIKAIHVT). The chain crosses the membrane as a helical span at residues 221–241 (RLILGFLIPLLVIAVCYLLIG). Residues 242-256 (RRVSSGRFKSQRAFQ) lie on the Cytoplasmic side of the membrane. Residues 257-277 (IILVVVTTFFVCWLPYHVIGL) form a helical membrane-spanning segment. Residues 278 to 295 (VIEYGKEASQVMARALDP) are Extracellular-facing. Residues 296–316 (LAISLAYVNSCLNPVLYVFMG) traverse the membrane as a helical segment. Residues 317–364 (QDFKERVRVSLRKIFEKVFSEDVTLRSSVYSKGQSQLSRATNSSEAQV) lie on the Cytoplasmic side of the membrane.

The protein belongs to the G-protein coupled receptor 1 family.

The protein localises to the cell membrane. Receptor for the chemotactic and inflammatory peptide anaphylatoxin C3a. This receptor stimulates chemotaxis, granule enzyme release and superoxide anion production. The polypeptide is C3a anaphylatoxin chemotactic receptor (c3ar1) (Oncorhynchus mykiss (Rainbow trout)).